A 191-amino-acid polypeptide reads, in one-letter code: Lipopolysaccharide export system protein LptC (191 aa).

Residues 7 to 25 (WVIIVLSLAVLVMIGINMA) traverse the membrane as a helical segment.

The protein belongs to the LptC family. Component of the lipopolysaccharide transport and assembly complex. Interacts with LptA and the LptBFG transporter complex.

It localises to the cell inner membrane. In terms of biological role, involved in the assembly of lipopolysaccharide (LPS). Required for the translocation of LPS from the inner membrane to the outer membrane. Facilitates the transfer of LPS from the inner membrane to the periplasmic protein LptA. Could be a docking site for LptA. This chain is Lipopolysaccharide export system protein LptC, found in Escherichia coli O157:H7.